Here is a 126-residue protein sequence, read N- to C-terminus: Apolipoprotein C-IV (126 aa).

The N-terminal stretch at 1-27 (MSLLRHRLQALPSLCLCVLVLACIGAC) is a signal peptide.

This sequence belongs to the apolipoprotein C4 family.

The protein resides in the secreted. In terms of biological role, may participate in lipoprotein metabolism. This is Apolipoprotein C-IV (APOC4) from Aotus nancymaae (Ma's night monkey).